A 349-amino-acid chain; its full sequence is Nucleoporin SEH1 (349 aa).

WD repeat units lie at residues 7–46, 53–94, 106–147, 153–192, and 210–253; these read GHDDLVHDVVYDFYGRHVATCSSDQHIKVFKLDKDTSNWE, AHDS…EECS, DSKG…DLRS, EMKVLSIPPANHLQSDFCLSWCPSRFSPEKLAVSALEQAI, and GHKS…SPLA. Position 257 is a phosphoserine (S257). Residues 263 to 285 form a disordered region; the sequence is MFDNSADVDMDAQGRSDSNTEEK. Residues 274 to 285 show a composition bias toward basic and acidic residues; the sequence is AQGRSDSNTEEK. The WD 6 repeat unit spans residues 302–341; it reads DHNGEVWSVSWNLTGTILSSAGDDGKVRLWKATYSNEFKC.

This sequence belongs to the WD repeat SEC13 family. In terms of assembly, component of the nuclear pore complex (NPC). NPC constitutes the exclusive means of nucleocytoplasmic transport. NPCs allow the passive diffusion of ions and small molecules and the active, nuclear transport receptor-mediated bidirectional transport of macromolecules such as proteins, RNAs, ribonucleoparticles (RNPs), and ribosomal subunits across the nuclear envelope. Due to its 8-fold rotational symmetry, all subunits are present with 8 copies or multiples thereof. SEH1 is part of the heptameric 0.5 MDa autoassembling NUP84 NPC subcomplex (NUP84, NUP85, NUP120, NUP133, NUP145C, SEC13 and SEH1). Component of the SEA complex composed of at least IML1/SEA1, RTC1/SEA2, MTC5/SEA3, NPR2, NPR3, SEA4, SEC13 and SEH1.

The protein resides in the nucleus. Its subcellular location is the nuclear pore complex. It is found in the nucleus membrane. It localises to the vacuole membrane. Functions as a component of the nuclear pore complex (NPC). NPC components, collectively referred to as nucleoporins (NUPs), can play the role of both NPC structural components and of docking or interaction partners for transiently associated nuclear transport factors. Involved in nuclear poly(A)+ RNA export and NPC biogenesis. It is also required for normal nuclear morphology. Component of the SEA complex which coats the vacuolar membrane and is involved in intracellular trafficking, autophagy, response to nitrogen starvation, and amino acid biogenesis. The sequence is that of Nucleoporin SEH1 (SEH1) from Saccharomyces cerevisiae (strain ATCC 204508 / S288c) (Baker's yeast).